Here is a 315-residue protein sequence, read N- to C-terminus: Transaldolase (315 aa).

Residue lysine 125 is the Schiff-base intermediate with substrate of the active site.

Belongs to the transaldolase family. Type 1 subfamily. Homodimer.

The protein resides in the cytoplasm. The catalysed reaction is D-sedoheptulose 7-phosphate + D-glyceraldehyde 3-phosphate = D-erythrose 4-phosphate + beta-D-fructose 6-phosphate. It participates in carbohydrate degradation; pentose phosphate pathway; D-glyceraldehyde 3-phosphate and beta-D-fructose 6-phosphate from D-ribose 5-phosphate and D-xylulose 5-phosphate (non-oxidative stage): step 2/3. Functionally, transaldolase is important for the balance of metabolites in the pentose-phosphate pathway. This Paracidovorax citrulli (strain AAC00-1) (Acidovorax citrulli) protein is Transaldolase.